We begin with the raw amino-acid sequence, 424 residues long: 3-ketoacyl-CoA thiolase B, peroxisomal (424 aa).

The transit peptide at 1–26 directs the protein to the peroxisome; that stretch reads MHRLQVVLGHLAGRPESSSALQAAPC. The PTS2-type peroxisomal targeting signal stretch occupies residues 1-26; sequence MHRLQVVLGHLAGRPESSSALQAAPC. Cysteine 123 acts as the Acyl-thioester intermediate in catalysis. Residues lysine 173 and lysine 234 each carry the N6-acetyllysine modification. CoA-binding residues include arginine 249, threonine 252, and serine 276. Cysteine 408 (proton donor/acceptor) is an active-site residue.

This sequence belongs to the thiolase-like superfamily. Thiolase family. As to quaternary structure, homodimer. Interacts (via PTS2-type peroxisomal targeting signal region) with PEX7; leading to its translocation into peroxisomes. As to expression, mainly expressed in liver; weaker levels in kidney, intestine and white adipose tissue.

The protein localises to the peroxisome. It catalyses the reaction an acyl-CoA + acetyl-CoA = a 3-oxoacyl-CoA + CoA. It carries out the reaction 2 acetyl-CoA = acetoacetyl-CoA + CoA. The enzyme catalyses hexanoyl-CoA + acetyl-CoA = 3-oxooctanoyl-CoA + CoA. The catalysed reaction is tetradecanoyl-CoA + acetyl-CoA = 3-oxohexadecanoyl-CoA + CoA. It catalyses the reaction 3-oxohexadecanedioyl-CoA + CoA = tetradecanedioyl-CoA + acetyl-CoA. It carries out the reaction 3-oxo-(6Z,9Z,12Z,15Z,18Z,21Z)-tetracosahexaenoyl-CoA + CoA = (4Z,7Z,10Z,13Z,16Z,19Z)-docosahexaenoyl-CoA + acetyl-CoA. It participates in lipid metabolism; peroxisomal fatty acid beta-oxidation. Responsible for the thiolytic cleavage of straight chain 3-keto fatty acyl-CoAs (3-oxoacyl-CoAs). Plays an important role in fatty acid peroxisomal beta-oxidation. Catalyzes the cleavage of short, medium, long, and very long straight chain 3-oxoacyl-CoAs. This Mus musculus (Mouse) protein is 3-ketoacyl-CoA thiolase B, peroxisomal.